A 1362-amino-acid chain; its full sequence is DNA-directed RNA polymerase subunit beta' (1362 aa).

Positions 1–14 (MTSSSKSRKSKSSK) are enriched in basic residues. Residues 1 to 39 (MTSSSKSRKSKSSKASKAAKEAPVSASRPLSKTPPPFRN) are disordered. Residues 15–27 (ASKAAKEAPVSAS) show a composition bias toward low complexity. Residues Cys248, Cys315, Cys322, and Cys325 each contribute to the Zn(2+) site. The segment at 1316–1336 (TRHNIDPSASNFAAFTRPDAD) is disordered.

This sequence belongs to the RNA polymerase beta' chain family. RpoC2 subfamily. In cyanobacteria the RNAP catalytic core is composed of 2 alpha, 1 beta, 1 beta', 1 gamma and 1 omega subunit. When a sigma factor is associated with the core the holoenzyme is formed, which can initiate transcription. The cofactor is Zn(2+).

The catalysed reaction is RNA(n) + a ribonucleoside 5'-triphosphate = RNA(n+1) + diphosphate. DNA-dependent RNA polymerase catalyzes the transcription of DNA into RNA using the four ribonucleoside triphosphates as substrates. The sequence is that of DNA-directed RNA polymerase subunit beta' from Synechococcus sp. (strain CC9605).